Reading from the N-terminus, the 368-residue chain is tRNA-specific 2-thiouridylase MnmA (368 aa).

Residues 14 to 21 and leucine 40 each bind ATP; that span reads AMSGGVDS. Cysteine 108 acts as the Nucleophile in catalysis. Cysteine 108 and cysteine 204 are joined by a disulfide. Position 132 (glycine 132) interacts with ATP. The tract at residues 154-156 is interaction with tRNA; sequence KDQ. The Cysteine persulfide intermediate role is filled by cysteine 204.

It belongs to the MnmA/TRMU family.

It is found in the cytoplasm. The enzyme catalyses S-sulfanyl-L-cysteinyl-[protein] + uridine(34) in tRNA + AH2 + ATP = 2-thiouridine(34) in tRNA + L-cysteinyl-[protein] + A + AMP + diphosphate + H(+). Catalyzes the 2-thiolation of uridine at the wobble position (U34) of tRNA, leading to the formation of s(2)U34. The sequence is that of tRNA-specific 2-thiouridylase MnmA from Rickettsia canadensis (strain McKiel).